Here is a 42-residue protein sequence, read N- to C-terminus: uncharacterized protein (42 aa).

The chain crosses the membrane as a helical span at residues 15 to 35 (INVCLSFFFLFYFIFVLFFAA).

The protein localises to the membrane. This is an uncharacterized protein from Dictyostelium discoideum (Social amoeba).